The following is an 88-amino-acid chain: Small ribosomal subunit protein bS20 (88 aa).

The segment at 1–20 (MANTAQARKRARQAVVQNAH) is disordered.

It belongs to the bacterial ribosomal protein bS20 family.

Its function is as follows. Binds directly to 16S ribosomal RNA. The sequence is that of Small ribosomal subunit protein bS20 from Ralstonia nicotianae (strain ATCC BAA-1114 / GMI1000) (Ralstonia solanacearum).